Consider the following 204-residue polypeptide: Small ribosomal subunit protein uS4 (204 aa).

Residues 25-47 (SPVNKREYGPGQHGQRRKKPSDY) are disordered. An S4 RNA-binding domain is found at 93–156 (RRLDAVVYRM…KQFAFVMEAA (64 aa)).

This sequence belongs to the universal ribosomal protein uS4 family. Part of the 30S ribosomal subunit. Contacts protein S5. The interaction surface between S4 and S5 is involved in control of translational fidelity.

Functionally, one of the primary rRNA binding proteins, it binds directly to 16S rRNA where it nucleates assembly of the body of the 30S subunit. Its function is as follows. With S5 and S12 plays an important role in translational accuracy. The sequence is that of Small ribosomal subunit protein uS4 from Rhodospirillum centenum (strain ATCC 51521 / SW).